Reading from the N-terminus, the 527-residue chain is MSENIRVSEVSDILRKQLEGINTNVQLDEIGTVLQVSDGVVRIYGLRNAEANELLEFDNGIKAIVMNLEEDNVGAVLLGPTDRIKEGFIVKRTKRIASIRVGESMLGRVIDPLGEPLDGKGLIGGELYEMPLERKAPGVIYRQPVNQPLQTGLKAVDAMIPIGRGQRELIIGDRQTGKTSIAIDTIINQRNNFLAGDPVYCIYVAIGQKGSTVASIVNTLREYGAMDYTIVVAATAGDPAALQYYAPFAGAAIGEYFRDTGRHALVVYDDLSKQAVAYREVSLILRRPSGREAYPGDIFYLHSRLLERAAKIIKEEEVAREMNDLPESLKGIVKVGGSLTALPIIETQAGDVSAYIPTNVISITDGQIFLETDLFNQGVRPAINVGISVSRVGGNAQIKAMKKVAGTLKMDQAQYRELEAFSKFSSDMDPITAMTIDKGRKNAQLLIQPQYSPMPVEQQIAILYCGTHGLLHDVPLENVQDFERSFIESLQLNHQEDVLDVLRTGVIDDNVTKAIEETAAMVAKQYL.

172 to 179 contacts ATP; sequence GDRQTGKT.

It belongs to the ATPase alpha/beta chains family. F-type ATPases have 2 components, CF(1) - the catalytic core - and CF(0) - the membrane proton channel. CF(1) has five subunits: alpha(3), beta(3), gamma(1), delta(1), epsilon(1). CF(0) has three main subunits: a(1), b(2) and c(9-12). The alpha and beta chains form an alternating ring which encloses part of the gamma chain. CF(1) is attached to CF(0) by a central stalk formed by the gamma and epsilon chains, while a peripheral stalk is formed by the delta and b chains.

The protein resides in the cell inner membrane. The enzyme catalyses ATP + H2O + 4 H(+)(in) = ADP + phosphate + 5 H(+)(out). Functionally, produces ATP from ADP in the presence of a proton gradient across the membrane. The alpha chain is a regulatory subunit. The chain is ATP synthase subunit alpha from Bacteroides thetaiotaomicron (strain ATCC 29148 / DSM 2079 / JCM 5827 / CCUG 10774 / NCTC 10582 / VPI-5482 / E50).